The chain runs to 371 residues: Barbiturase 1 (371 aa).

The tract at residues 1–103 (MPDAIEVRKV…TIFATVPPED (103 aa)) is RU A. Substrate is bound by residues arginine 53 and 82 to 83 (SG). Residues 115–250 (RLTVGFAMSE…AQVVVVGNAP (136 aa)) form an RU B region. Residue lysine 165 is part of the active site. Substrate-binding positions include asparagine 197 and 233–234 (SS). Residue serine 233 is the Nucleophile of the active site. Residues 256-371 (YRIGHSVMKD…GPVAAIVDLG (116 aa)) are RU C. Glutamate 304 is a Mg(2+) binding site. Residues lysine 331 and 350–351 (SV) contribute to the substrate site. Mg(2+)-binding residues include alanine 353, glutamine 356, glycine 357, proline 358, and glycine 361.

Belongs to the cyclic amide hydrolase (CyAH) family. As to quaternary structure, homotetramer.

The catalysed reaction is barbiturate + H2O = 3-oxo-3-ureidopropanoate. It functions in the pathway pyrimidine metabolism; uracil degradation via oxidative pathway; malonate and urea from uracil: step 2/3. Its activity is regulated as follows. Inhibited by cyanuric acid. Functionally, responsible for the hydrolysis of barbituric acid (2,4,6-trihydroxy-1,3-pyrimidine), an intermediate in the oxidative catabolism of pyrimidines. Catalyzes the hydrolytic opening of the pyrimidine ring of barbituric acid to yield ureidomalonic acid. This chain is Barbiturase 1, found in Nocardioides sp. (strain ATCC BAA-499 / JS614).